The chain runs to 602 residues: Toxin YwqJ (602 aa).

Residues 1 to 235 enclose the LXG domain; sequence MSKVFESKSL…TTYIDAKTQQ (235 aa). 2 coiled-coil regions span residues 6–41 and 227–251; these read ESKS…VADL and TYID…EANK.

It in the N-terminal section; belongs to the LXG family. Probably interacts with cognate immunity protein YwqK but not with non-cognate immunity proteins. The interaction inhibits the toxic activity of YwqJ.

It is found in the secreted. Toxic component of one of 6 LXG toxin-immunity modules in this strain. They promote kin selection, mediate competition in biofilms, and drive spatial segregation of different strains, indicating that LXG toxins may help avoid warfare between strains in biofilms. Mediates intercellular competition during biofilm formation; disruption of the operon disadvantages the bacteria, but overexpression of the cognate immunity protein restores growth in competition with wild-type. Overexpression alone in situ causes growth arrest but not cell lysis; no effect is seen on DNA or rRNA. Co-overexpression with cognate immunity protein YwqK does not cause growth arrest. The toxic effect is dependent on the epsA and tapA operons which are required for biofilm formation. Its toxic effects are probably neutralized by its cognate immunity protein YwqK, but not by immunity proteins specific to other toxins with the LXG domain. May have deaminase activity. The protein is Toxin YwqJ (ywqJ) of Bacillus subtilis (strain 168).